Consider the following 230-residue polypeptide: MAHPAQLGFQDAASPVMEELLCFHDHALMIVFLISTLVLYIIIAMVSTKLTNKFILDSQEIEIVWTVLPAIILILIALPSLRILYLMDEINDPHVTIKAVGHQWYWSYEYTDYENLEFDSYMVPTQDLTPGGFRLLETDHRMVVPKESPIRILVSAEDVLHSWAVPSLGIKMDAVPGRLNQTAFIVSRPGVFYGQCSEICGANHSFMPIVVEAVPLEFFENWSSAMLEDA.

Residues 1-14 (MAHPAQLGFQDAAS) are Mitochondrial intermembrane-facing. Residues 15 to 45 (PVMEELLCFHDHALMIVFLISTLVLYIIIAM) traverse the membrane as a helical segment. At 46–59 (VSTKLTNKFILDSQ) the chain is on the mitochondrial matrix side. A helical transmembrane segment spans residues 60 to 87 (EIEIVWTVLPAIILILIALPSLRILYLM). Residues 88–230 (DEINDPHVTI…NWSSAMLEDA (143 aa)) are Mitochondrial intermembrane-facing. Cu cation is bound by residues H161, C196, E198, C200, H204, and M207. Residue E198 participates in Mg(2+) binding.

Belongs to the cytochrome c oxidase subunit 2 family. As to quaternary structure, component of the cytochrome c oxidase (complex IV, CIV), a multisubunit enzyme composed of 14 subunits. The complex is composed of a catalytic core of 3 subunits MT-CO1, MT-CO2 and MT-CO3, encoded in the mitochondrial DNA, and 11 supernumerary subunits COX4I, COX5A, COX5B, COX6A, COX6B, COX6C, COX7A, COX7B, COX7C, COX8 and NDUFA4, which are encoded in the nuclear genome. The complex exists as a monomer or a dimer and forms supercomplexes (SCs) in the inner mitochondrial membrane with NADH-ubiquinone oxidoreductase (complex I, CI) and ubiquinol-cytochrome c oxidoreductase (cytochrome b-c1 complex, complex III, CIII), resulting in different assemblies (supercomplex SCI(1)III(2)IV(1) and megacomplex MCI(2)III(2)IV(2)). Found in a complex with TMEM177, COA6, COX18, COX20, SCO1 and SCO2. Interacts with TMEM177 in a COX20-dependent manner. Interacts with COX20. Interacts with COX16. It depends on Cu cation as a cofactor.

It is found in the mitochondrion inner membrane. It catalyses the reaction 4 Fe(II)-[cytochrome c] + O2 + 8 H(+)(in) = 4 Fe(III)-[cytochrome c] + 2 H2O + 4 H(+)(out). Component of the cytochrome c oxidase, the last enzyme in the mitochondrial electron transport chain which drives oxidative phosphorylation. The respiratory chain contains 3 multisubunit complexes succinate dehydrogenase (complex II, CII), ubiquinol-cytochrome c oxidoreductase (cytochrome b-c1 complex, complex III, CIII) and cytochrome c oxidase (complex IV, CIV), that cooperate to transfer electrons derived from NADH and succinate to molecular oxygen, creating an electrochemical gradient over the inner membrane that drives transmembrane transport and the ATP synthase. Cytochrome c oxidase is the component of the respiratory chain that catalyzes the reduction of oxygen to water. Electrons originating from reduced cytochrome c in the intermembrane space (IMS) are transferred via the dinuclear copper A center (CU(A)) of subunit 2 and heme A of subunit 1 to the active site in subunit 1, a binuclear center (BNC) formed by heme A3 and copper B (CU(B)). The BNC reduces molecular oxygen to 2 water molecules using 4 electrons from cytochrome c in the IMS and 4 protons from the mitochondrial matrix. The polypeptide is Cytochrome c oxidase subunit 2 (mt-co2) (Danio rerio (Zebrafish)).